Here is a 214-residue protein sequence, read N- to C-terminus: MRIILLGAPGAGKGTQAQFIMEKYGIPQISTGDMLRAAVKSGSELGKQAKDIMDAGKLVTDELVIALVKERIAQEDCHNGFLLDGFPRTIPQADAMKEAGINVDYVLEFDVPDELIVDRIVGRRVHAPSGRVYHVKFNPPKVEGKDDVTGEELTTRKDDQEETVRKRLVEYHQMTAPLIGYYSKEAEAGNTKYAKVDGTKPVAEVRADLEKILG.

10–15 contacts ATP; that stretch reads GAGKGT. Residues 30 to 59 are NMP; it reads STGDMLRAAVKSGSELGKQAKDIMDAGKLV. AMP is bound by residues T31, R36, 57–59, 85–88, and Q92; these read KLV and GFPR. Residues 122–159 form an LID region; sequence GRRVHAPSGRVYHVKFNPPKVEGKDDVTGEELTTRKDD. ATP is bound by residues R123 and 132 to 133; that span reads VY. The AMP site is built by R156 and R167. K192 carries the N6-acetyllysine modification. K200 lines the ATP pocket.

It belongs to the adenylate kinase family. In terms of assembly, monomer.

It is found in the cytoplasm. The catalysed reaction is AMP + ATP = 2 ADP. The protein operates within purine metabolism; AMP biosynthesis via salvage pathway; AMP from ADP: step 1/1. Functionally, catalyzes the reversible transfer of the terminal phosphate group between ATP and AMP. Plays an important role in cellular energy homeostasis and in adenine nucleotide metabolism. In Escherichia coli O8 (strain IAI1), this protein is Adenylate kinase.